A 161-amino-acid polypeptide reads, in one-letter code: Putative pre-16S rRNA nuclease (161 aa).

The protein belongs to the YqgF nuclease family.

The protein resides in the cytoplasm. In terms of biological role, could be a nuclease involved in processing of the 5'-end of pre-16S rRNA. This is Putative pre-16S rRNA nuclease from Bradyrhizobium sp. (strain BTAi1 / ATCC BAA-1182).